Reading from the N-terminus, the 343-residue chain is Inositol 2-dehydrogenase 1 (343 aa).

The protein belongs to the Gfo/Idh/MocA family. Homotetramer.

The enzyme catalyses myo-inositol + NAD(+) = scyllo-inosose + NADH + H(+). Functionally, involved in the oxidation of myo-inositol (MI) to 2-keto-myo-inositol (2KMI or 2-inosose). The chain is Inositol 2-dehydrogenase 1 from Mycolicibacterium vanbaalenii (strain DSM 7251 / JCM 13017 / BCRC 16820 / KCTC 9966 / NRRL B-24157 / PYR-1) (Mycobacterium vanbaalenii).